Consider the following 328-residue polypeptide: Phosphate acetyltransferase (328 aa).

The protein belongs to the phosphate acetyltransferase and butyryltransferase family.

The protein localises to the cytoplasm. It carries out the reaction acetyl-CoA + phosphate = acetyl phosphate + CoA. It participates in metabolic intermediate biosynthesis; acetyl-CoA biosynthesis; acetyl-CoA from acetate: step 2/2. In Staphylococcus aureus (strain MRSA252), this protein is Phosphate acetyltransferase (pta).